Here is a 156-residue protein sequence, read N- to C-terminus: Phospholipase A2 A2-hormotoxin-Apt1a (156 aa).

Residues 1-19 form the signal peptide; sequence MQLYTYFFTFSLVLILALA. The propeptide occupies 20–35; sequence DQENKSLDFTQEGGIA. 5 disulfides stabilise this stretch: C62–C156, C64–C80, C79–C138, C86–C131, and C115–C129. The Ca(2+) site is built by G65 and G67. The active site involves H83. D84 contacts Ca(2+). The active site involves D132.

The protein belongs to the phospholipase A2 family. Ca(2+) serves as cofactor.

The protein localises to the secreted. Its subcellular location is the nematocyst. The catalysed reaction is a 1,2-diacyl-sn-glycero-3-phosphocholine + H2O = a 1-acyl-sn-glycero-3-phosphocholine + a fatty acid + H(+). In terms of biological role, sea anemone phospholipase A2 (PLA2) that may have a role both in defense and in digestion, since its expression and enzymatic activity were found both in the acontia (defensive organs) and tentacles. PLA2 catalyzes the calcium-dependent hydrolysis of the 2-acyl groups in 3-sn-phosphoglycerides. In Adamsia palliata (Cloak anemone), this protein is Phospholipase A2 A2-hormotoxin-Apt1a.